We begin with the raw amino-acid sequence, 399 residues long: Carbamoyl phosphate synthase small chain (399 aa).

The interval 1-209 (MEKFKLLKLG…SAINKKLHTS (209 aa)) is CPSase. Ser55, Gly261, and Gly263 together coordinate L-glutamine. The 187-residue stretch at 213–399 (RIIVLDLGVK…VYIIYKSKSS (187 aa)) folds into the Glutamine amidotransferase type-1 domain. Cys289 (nucleophile) is an active-site residue. Leu290, Gln293, Asn329, Gly331, and Phe332 together coordinate L-glutamine. Catalysis depends on residues His372 and Glu374.

Belongs to the CarA family. As to quaternary structure, composed of two chains; the small (or glutamine) chain promotes the hydrolysis of glutamine to ammonia, which is used by the large (or ammonia) chain to synthesize carbamoyl phosphate. Tetramer of heterodimers (alpha,beta)4.

Its subcellular location is the plastid. The protein resides in the chloroplast. The catalysed reaction is hydrogencarbonate + L-glutamine + 2 ATP + H2O = carbamoyl phosphate + L-glutamate + 2 ADP + phosphate + 2 H(+). It catalyses the reaction L-glutamine + H2O = L-glutamate + NH4(+). The protein operates within amino-acid biosynthesis; L-arginine biosynthesis; carbamoyl phosphate from bicarbonate: step 1/1. Its pathway is pyrimidine metabolism; UMP biosynthesis via de novo pathway; (S)-dihydroorotate from bicarbonate: step 1/3. Small subunit of the glutamine-dependent carbamoyl phosphate synthetase (CPSase). CPSase catalyzes the formation of carbamoyl phosphate from the ammonia moiety of glutamine, carbonate, and phosphate donated by ATP, constituting the first step of 2 biosynthetic pathways, one leading to arginine and/or urea and the other to pyrimidine nucleotides. The small subunit (glutamine amidotransferase) binds and cleaves glutamine to supply the large subunit with the substrate ammonia. In Cyanidium caldarium (Red alga), this protein is Carbamoyl phosphate synthase small chain.